Here is a 909-residue protein sequence, read N- to C-terminus: Translation initiation factor IF-2 (909 aa).

Residues 49 to 314 (LNREQGGSAG…GKQRKTSTLQ (266 aa)) form a disordered region. Composition is skewed to basic and acidic residues over residues 99–177 (DAVE…EHKQ), 186–236 (IQSE…KWSS), and 255–270 (RAAE…GDRR). Basic residues predominate over residues 271 to 285 (ARGRSGKATRQKKNN). A compositionally biased stretch (basic and acidic residues) spans 286–299 (KHSESKADREEARA). Residues 408–577 (PRAPVVTIMG…LLQAEVLELK (170 aa)) form the tr-type G domain. Residues 417-424 (GHVDHGKT) form a G1 region. 417-424 (GHVDHGKT) contacts GTP. The segment at 442–446 (GITQH) is G2. Residues 463–466 (DTPG) are G3. GTP is bound by residues 463 to 467 (DTPGH) and 517 to 520 (NKID). Residues 517-520 (NKID) form a G4 region. The tract at residues 553–555 (SAK) is G5.

This sequence belongs to the TRAFAC class translation factor GTPase superfamily. Classic translation factor GTPase family. IF-2 subfamily.

It is found in the cytoplasm. One of the essential components for the initiation of protein synthesis. Protects formylmethionyl-tRNA from spontaneous hydrolysis and promotes its binding to the 30S ribosomal subunits. Also involved in the hydrolysis of GTP during the formation of the 70S ribosomal complex. The chain is Translation initiation factor IF-2 from Photorhabdus laumondii subsp. laumondii (strain DSM 15139 / CIP 105565 / TT01) (Photorhabdus luminescens subsp. laumondii).